The following is a 481-amino-acid chain: Proline--tRNA ligase (481 aa).

The protein belongs to the class-II aminoacyl-tRNA synthetase family. ProS type 3 subfamily. Homodimer.

It localises to the cytoplasm. The catalysed reaction is tRNA(Pro) + L-proline + ATP = L-prolyl-tRNA(Pro) + AMP + diphosphate. Functionally, catalyzes the attachment of proline to tRNA(Pro) in a two-step reaction: proline is first activated by ATP to form Pro-AMP and then transferred to the acceptor end of tRNA(Pro). Can inadvertently accommodate and process cysteine. Misacylated Cys-tRNA(Pro) is not edited by ProRS; this function may be provided by ProX. In Acetoanaerobium sticklandii (strain ATCC 12662 / DSM 519 / JCM 1433 / CCUG 9281 / NCIMB 10654 / HF) (Clostridium sticklandii), this protein is Proline--tRNA ligase (proS).